Reading from the N-terminus, the 485-residue chain is MALLVEKTTSGREYKVKDMSQADFGRLEIELAEVEMPGLMACRTEFGPSQPFKGAKITGSLHMTIQTAVLIETLTALGAEVRWCSCNIFSTQDHAAAAIARDSAAVFAWKGETLQEYWWCTERALDWGPGGGPDLIVDDGGDATLLIHEGVKAEEEFAKNGTIPDPNSTDNAEFQLVLTIIKESLKTDPLKYTKMKERLVGVSEETTTGVKRLYQMQANGTLLFPAINVNDSVTKSKFDNLYGCRHSLPDGLMRATDVMIAGKVALVAGYGDVGKGCAAALKQAGARVIVTEIDPICALQATMEGLQVLTLEDVVSDVDIFVTTTGNKDIIMVDHMRKMKNNAIVCNIGHFDNEIDMLGLETYPGVKRITIKPQTDRWVFPDTNSGIIVLAEGRLMNLGCATGHPSFVMSCSFTNQVIAQLELWNEKSSGKYEKKVYVLPKHLDEKVAALHLGKLGAKLTKLSKDQADYISVPVEGPYKPAHYRY.

Substrate is bound by residues Thr-64, Asp-139, and Glu-205. 206–208 (TTT) serves as a coordination point for NAD(+). Residues Lys-235 and Asp-239 each contribute to the substrate site. NAD(+) is bound by residues Asn-240, 269–274 (GYGDVG), Glu-292, Asn-327, 348–350 (IGH), and Asn-397.

The protein belongs to the adenosylhomocysteinase family. Requires NAD(+) as cofactor.

The enzyme catalyses S-adenosyl-L-homocysteine + H2O = L-homocysteine + adenosine. It participates in amino-acid biosynthesis; L-homocysteine biosynthesis; L-homocysteine from S-adenosyl-L-homocysteine: step 1/1. In terms of biological role, adenosylhomocysteine is a competitive inhibitor of S-adenosyl-L-methionine-dependent methyl transferase reactions; therefore adenosylhomocysteinase may play a key role in the control of methylations via regulation of the intracellular concentration of adenosylhomocysteine. The polypeptide is Adenosylhomocysteinase (SAHH) (Nicotiana sylvestris (Wood tobacco)).